A 326-amino-acid polypeptide reads, in one-letter code: MSLFDWFANRRKSSQDPQQRPEREIADGLWIKCEACGTLTYTKDLQANQMVCPECTHHIRVSSEQRIQQLIDFNTWVPIDPELRATDPLKFSDRKPYSDRLLEYQRKTGLPDAVQTGIGNIETEPVALGVMDFGFMGGSMGSVVGEKLTRLIEKATQESLPVIIICASGGARMQEGLLSLMQMAKISGALEQHREAKQLYIPILTHPTTGGVTASFAMLGDIIIAEPKATIGFAGRRVIEQTVREKLPENFQTSEYLLKHGFIDAIVPRTQLKKTLVKLIRLHKPHSLTLISDESLETGPHCHLPFQAESHNLSTTDNKIQPTPQG.

The CoA carboxyltransferase N-terminal domain maps to 29-298; sequence LWIKCEACGT…TLISDESLET (270 aa). Zn(2+)-binding residues include cysteine 33, cysteine 36, cysteine 52, and cysteine 55. The C4-type zinc finger occupies 33 to 55; it reads CEACGTLTYTKDLQANQMVCPEC. Residues 302–326 form a disordered region; the sequence is CHLPFQAESHNLSTTDNKIQPTPQG. Positions 309–326 are enriched in polar residues; the sequence is ESHNLSTTDNKIQPTPQG.

This sequence belongs to the AccD/PCCB family. In terms of assembly, acetyl-CoA carboxylase is a heterohexamer composed of biotin carboxyl carrier protein (AccB), biotin carboxylase (AccC) and two subunits each of ACCase subunit alpha (AccA) and ACCase subunit beta (AccD). It depends on Zn(2+) as a cofactor.

It localises to the cytoplasm. It catalyses the reaction N(6)-carboxybiotinyl-L-lysyl-[protein] + acetyl-CoA = N(6)-biotinyl-L-lysyl-[protein] + malonyl-CoA. The protein operates within lipid metabolism; malonyl-CoA biosynthesis; malonyl-CoA from acetyl-CoA: step 1/1. In terms of biological role, component of the acetyl coenzyme A carboxylase (ACC) complex. Biotin carboxylase (BC) catalyzes the carboxylation of biotin on its carrier protein (BCCP) and then the CO(2) group is transferred by the transcarboxylase to acetyl-CoA to form malonyl-CoA. This chain is Acetyl-coenzyme A carboxylase carboxyl transferase subunit beta, found in Trichodesmium erythraeum (strain IMS101).